The chain runs to 64 residues: Large ribosomal subunit protein bL35 (64 aa).

Basic residues predominate over residues 22 to 31 (GKVKHGHAYR). A disordered region spans residues 22 to 64 (GKVKHGHAYRSHLAQSKTTKQKRQSRKSTLMNNSDFKRLKKLI).

Belongs to the bacterial ribosomal protein bL35 family.

This Mesomycoplasma hyopneumoniae (strain 232) (Mycoplasma hyopneumoniae) protein is Large ribosomal subunit protein bL35.